The primary structure comprises 458 residues: MKKNDLSALQENCFCFCDEEISREAPFQVPIDFPEGFKVDTAEASAAVTWSTDNLSCISEPCLIQTGPEPEDIGVRYAVRVQGTITLLVSVSPVRNQYGQGDGAVSVIHTEEIDQVVYYAAQSGRCPDFSQITVEDLLIVPPFYGSPLTVAGTLVLPPSPDPQSYVFTANTGDSTVSVIDADLNTVVKTIPFSDVPTNLGVTFDKAFTYVLHGNTNLVSVIDNKTLTIINTITVGGGPRKIEFDPTDEFAYVMAAGSIYVINTASQSVIDVIPIPGALDFALDPNGQYVYTANGSSWSVDKYDVNTGQLVESIIDTFEFPSLITTPYAGNFAYVLNGELWPKGVTEISLSPLSRGGDFSRLFETLRTIVFSLDSTRAYFLEPYSEPFLINNLYVVNTARQRIIANVSLPGAFDLAVTPDKQYIYAAQPNDNAVTVYRTSDYTAVTVIPVGAGPSAIAM.

This is an uncharacterized protein from Bacillus subtilis (strain 168).